The sequence spans 318 residues: (1S)-1,7-diacetoxy-luvungin A aldo-keto reductase (318 aa).

Y54 functions as the Proton donor in the catalytic mechanism.

This sequence belongs to the aldo/keto reductase family. Expressed in flowers, maturing fruits and in juice vesicles.

It carries out the reaction (1S)-1,7-diacetoxy-luvungin A + AH2 + H2O = (1R,2R,3S,8R,10R,11R,15S,16S)-3-(acetyloxy)-15-[(4R)-4-[(2S)-3,3-dimethyloxiran-2-yl]-1,4-dihydroxybutan-2-yl]-2,7,7,11,16-pentamethyl-5-oxo-6-oxatetracyclo[9.7.0.0(2,8).0(12,16)]octadec-12-en-10-yl acetate + acetate + A + H(+). Its pathway is secondary metabolite biosynthesis; terpenoid biosynthesis. Functionally, aldo-keto reductase involved in the biosynthesis of limonoids triterpene natural products such as limonin, a compound with insecticidal activity responsible for the bitter taste in citrus. Can use (1S)-1,7-diacetoxy-luvungin A as substrate. The polypeptide is (1S)-1,7-diacetoxy-luvungin A aldo-keto reductase (Citrus sinensis (Sweet orange)).